Consider the following 342-residue polypeptide: N-acetyl-gamma-glutamyl-phosphate reductase (342 aa).

Cys-149 is a catalytic residue.

Belongs to the NAGSA dehydrogenase family. Type 1 subfamily.

The protein localises to the cytoplasm. It carries out the reaction N-acetyl-L-glutamate 5-semialdehyde + phosphate + NADP(+) = N-acetyl-L-glutamyl 5-phosphate + NADPH + H(+). It functions in the pathway amino-acid biosynthesis; L-arginine biosynthesis; N(2)-acetyl-L-ornithine from L-glutamate: step 3/4. In terms of biological role, catalyzes the NADPH-dependent reduction of N-acetyl-5-glutamyl phosphate to yield N-acetyl-L-glutamate 5-semialdehyde. The polypeptide is N-acetyl-gamma-glutamyl-phosphate reductase (Paracoccus denitrificans (strain Pd 1222)).